A 54-amino-acid polypeptide reads, in one-letter code: UPF0391 membrane protein Rmet_0093 (54 aa).

2 helical membrane-spanning segments follow: residues 5–25 and 30–50; these read ALVF…GIAA and IAKI…VMGL.

It belongs to the UPF0391 family.

Its subcellular location is the cell membrane. This is UPF0391 membrane protein Rmet_0093 from Cupriavidus metallidurans (strain ATCC 43123 / DSM 2839 / NBRC 102507 / CH34) (Ralstonia metallidurans).